Consider the following 235-residue polypeptide: C-type lectin domain family 2 member D-related protein (235 aa).

A disordered region spans residues 1 to 50 (MPSSAHLQDPPPHLSRTLTQDEEQTSLRQSSSCGPSTTSASASESLSGST). The Cytoplasmic portion of the chain corresponds to 1-75 (MPSSAHLQDP…KIIPTESAAK (75 aa)). A compositionally biased stretch (low complexity) spans 30-50 (SSSCGPSTTSASASESLSGST). The helical; Signal-anchor for type II membrane protein transmembrane segment at 76-96 (LLCCYAVFMALTVVVIALSIA) threads the bilayer. The Extracellular segment spans residues 97–235 (LSVKKTPQIS…KLNSYTSQCP (139 aa)). The C-type lectin domain maps to 121–232 (FGNKCYYFNE…ICSKLNSYTS (112 aa)). N-linked (GlcNAc...) asparagine glycosylation occurs at asparagine 134.

It is found in the cell membrane. Functionally, lectin-type cell surface receptor. The polypeptide is C-type lectin domain family 2 member D-related protein (Rattus norvegicus (Rat)).